Reading from the N-terminus, the 606-residue chain is Threonine--tRNA ligase (606 aa).

Positions 212–503 (DHRKLGVEMK…LIEHTAGELP (292 aa)) are catalytic. Zn(2+) contacts are provided by Cys304, His355, and His480.

The protein belongs to the class-II aminoacyl-tRNA synthetase family. Homodimer. It depends on Zn(2+) as a cofactor.

Its subcellular location is the cytoplasm. The enzyme catalyses tRNA(Thr) + L-threonine + ATP = L-threonyl-tRNA(Thr) + AMP + diphosphate + H(+). Catalyzes the attachment of threonine to tRNA(Thr) in a two-step reaction: L-threonine is first activated by ATP to form Thr-AMP and then transferred to the acceptor end of tRNA(Thr). Also edits incorrectly charged L-seryl-tRNA(Thr). The polypeptide is Threonine--tRNA ligase (Campylobacter curvus (strain 525.92)).